A 1552-amino-acid chain; its full sequence is ABC multidrug transporter lscH (1552 aa).

2 helical membrane-spanning segments follow: residues 32–52 (ETIL…IPII) and 68–88 (WFKK…VGLW). The N-linked (GlcNAc...) asparagine glycan is linked to N91. Transmembrane regions (helical) follow at residues 100–120 (STPS…LSTI), 158–178 (HSAI…MLLL), 280–300 (LFQI…IELA), 311–331 (NGYG…VSVG), 413–433 (AACV…VFLA), 457–477 (ALAS…FSVI), 500–520 (ILSI…FAGI), and 528–548 (LTIA…SPLA). One can recognise an ABC transmembrane type-1 1 domain in the interval 280-559 (LFQIGFTYAQ…IVQALPQISG (280 aa)). The disordered stretch occupies residues 573 to 655 (AEERHDPRST…PDANGDSRDA (83 aa)). A compositionally biased stretch (polar residues) spans 581–602 (STTTGTSPESNNGSQQTLSDKQ). The N-linked (GlcNAc...) asparagine glycan is linked to N592. The region spanning 639–884 (GHLADTTPDA…AELGWADRDL (246 aa)) is the ABC transporter 1 domain. 676-683 (GPVGCGKS) is a binding site for ATP. N719 and N834 each carry an N-linked (GlcNAc...) asparagine glycan. The span at 887–912 (QQEKPGKDELNHEHGEYSESAPEKLR) shows a compositional bias: basic and acidic residues. A disordered region spans residues 887-917 (QQEKPGKDELNHEHGEYSESAPEKLRRSQTN). Transmembrane regions (helical) follow at residues 957 to 977 (GWLT…CDSF) and 1005 to 1025 (AVLG…LFII). Positions 963–1241 (IFVIAICVYA…ATITSWVTLE (279 aa)) constitute an ABC transmembrane type-1 2 domain. An N-linked (GlcNAc...) asparagine glycan is attached at N1028. 4 consecutive transmembrane segments (helical) span residues 1076-1096 (AALG…LVCV), 1100-1120 (YMAA…HFYL), 1184-1204 (WITF…IVLT), and 1210-1230 (AIGP…SATM). The region spanning 1295–1538 (IELDNVTASY…PTSIFKELYL (244 aa)) is the ABC transporter 2 domain. N-linked (GlcNAc...) asparagine glycans are attached at residues N1299 and N1313. ATP is bound at residue 1328 to 1335 (GRTGSGKS).

Belongs to the ABC transporter superfamily. ABCC family. Conjugate transporter (TC 3.A.1.208) subfamily.

It is found in the cell membrane. In terms of biological role, ABC multidrug transporter; part of the gene cluster that mediates the biosynthesis of the lipopeptide antibiotics leucinostatins that show extensive biological activities, including antimalarial, antiviral, antibacterial, antifungal, and antitumor activities, as well as phytotoxic. May be involved in the efflux of leucinostatins. The protein is ABC multidrug transporter lscH of Purpureocillium lilacinum (Paecilomyces lilacinus).